Here is a 692-residue protein sequence, read N- to C-terminus: MNHQDFLVEIGAEELPPKALRQLAEAFAQGIRQRLEKAQLSFSELTWYAAPRRLAVHVSGLAEKQPDLEVEKRGPALQAAFDAAGAPTKACEGFARSCGTTPDKLEKLETDKGVWLVFRSKQAGAPTTGLLPAIVEESLAALPIPKRMRWGARRTEFVRPVHWIIMLFGEKVIDCEILGLKAGNTTLGHRFHHPAPIEIATPANYKDALKNTGYVMADFEERKALIRQQVEAIAKQTSGMAVIDEELLEEVASLNEWPTALMGRFEDRFLEVPAEALISTMKGNQKYFHVVDAEGRMLPYFITVANIESKDPQQVIDGNERVIRPRLSDAAFFFSTDKKRTLASRLEDLKPIVFQQQLGTVYDKAIRVGKLAAKIAAKIDSNPEWAQRAGELSKTDLATEMVMEFPELQGTMGRYYAAIDSEPEEVSMAQEEQYLPRFAGDQLPTTLTGCAVSLADKLDTIVGIFGINQPPTGAKDPFGLRRAALGVLRILVEKKLDLDLAECVQWAQELHGDLPAENLETAVVDYMLDRFRAWYEEAGVPTEVFLSVLARRPTKPVEFDQRVLAVAEFLKLDAAQALAAANKRVSNILSKEQVDISAESANPELFTEEAEKNLFRALQEKSESARPYIEQRNFTQALQQLAELKDVIDLFFDKVMVMVDDPAIRSNRMTLLASLRHVFLQVADISLLQNKA.

This sequence belongs to the class-II aminoacyl-tRNA synthetase family. In terms of assembly, tetramer of two alpha and two beta subunits.

Its subcellular location is the cytoplasm. It carries out the reaction tRNA(Gly) + glycine + ATP = glycyl-tRNA(Gly) + AMP + diphosphate. This is Glycine--tRNA ligase beta subunit from Hahella chejuensis (strain KCTC 2396).